A 639-amino-acid chain; its full sequence is Kininogen-1 (639 aa).

The first 18 residues, 1–18 (MKLITILLLCSRLLPSLA), serve as a signal peptide directing secretion. The region spanning 28 to 132 (CNDESLFQAV…TQICNITPGK (105 aa)) is the Cystatin kininogen-type 1 domain. 9 disulfide bridges follow: cysteine 28–cysteine 609, cysteine 83–cysteine 94, cysteine 107–cysteine 126, cysteine 142–cysteine 145, cysteine 206–cysteine 218, cysteine 229–cysteine 248, cysteine 264–cysteine 267, cysteine 328–cysteine 340, and cysteine 351–cysteine 370. Asparagine 82 carries an N-linked (GlcNAc...) asparagine glycan. Positions 151-254 (VDSPELGPVL…SDSCEFYPGD (104 aa)) constitute a Cystatin kininogen-type 2 domain. 2 N-linked (GlcNAc...) asparagine glycosylation sites follow: asparagine 169 and asparagine 205. A Cystatin kininogen-type 3 domain is found at 273 to 376 (VDSPELKEAL…TVKCKVLDMT (104 aa)). An N-linked (GlcNAc...) asparagine glycan is attached at asparagine 294. Serine 332 bears the Phosphoserine mark. Disordered stretches follow at residues 438–462 (NHQGHKHGHGIGHGHQKPHGLGHGH) and 476–547 (GYDH…LNPP). The span at 482–502 (PVGHGHGQRHGHGHGHGHGRD) shows a compositional bias: basic residues. The segment covering 503 to 519 (KHTNKDKNNVKHTDQRR) has biased composition (basic and acidic residues). The span at 522–537 (LTSSSEDNTTSTQIQG) shows a compositional bias: polar residues. Asparagine 529 carries an N-linked (GlcNAc...) asparagine glycan.

Post-translationally, bradykinin is released from kininogen by plasma kallikrein. Phosphorylated by FAM20C in the extracellular medium. In terms of processing, bradykinin is inactivated by ACE, which removes the dipeptide Arg-Phe from its C-terminus. As to expression, plasma.

The protein resides in the secreted. Its subcellular location is the extracellular space. Its function is as follows. Kininogens are inhibitors of thiol proteases. HMW-kininogen plays an important role in blood coagulation by helping to position optimally prekallikrein and factor XI next to factor XII; HMW-kininogen inhibits the thrombin- and plasmin-induced aggregation of thrombocytes. LMW-kininogen inhibits the aggregation of thrombocytes. LMW-kininogen is in contrast to HMW-kininogen not involved in blood clotting. In terms of biological role, the active peptide bradykinin is a potent vasodilatator that is released from HMW-kininogen shows a variety of physiological effects: (A) influence in smooth muscle contraction, (B) induction of hypotension, (C) natriuresis and diuresis, (D) decrease in blood glucose level, (E) it is a mediator of inflammation and causes (E1) increase in vascular permeability, (E2) stimulation of nociceptors (4E3) release of other mediators of inflammation (e.g. prostaglandins), (F) it has a cardioprotective effect (directly via bradykinin action, indirectly via endothelium-derived relaxing factor action). This chain is Kininogen-1 (Kng1), found in Rattus norvegicus (Rat).